We begin with the raw amino-acid sequence, 762 residues long: Xaa-Pro dipeptidyl-peptidase (762 aa).

Catalysis depends on charge relay system residues S349, D469, and H499.

It belongs to the peptidase S15 family. In terms of assembly, homodimer.

The protein localises to the cytoplasm. It catalyses the reaction Hydrolyzes Xaa-Pro-|- bonds to release unblocked, N-terminal dipeptides from substrates including Ala-Pro-|-p-nitroanilide and (sequentially) Tyr-Pro-|-Phe-Pro-|-Gly-Pro-|-Ile.. In terms of biological role, removes N-terminal dipeptides sequentially from polypeptides having unsubstituted N-termini provided that the penultimate residue is proline. The sequence is that of Xaa-Pro dipeptidyl-peptidase from Streptococcus sanguinis (strain SK36).